Consider the following 546-residue polypeptide: NAD(P)H-quinone oxidoreductase chain 4 (546 aa).

Helical transmembrane passes span 24 to 44 (FPWL…IPFF), 56 to 76 (FALS…INGF), 108 to 128 (MPLI…AWPV), 132 to 152 (PKLF…VFAV), 156 to 176 (LLFF…LAIW), 188 to 208 (FIIY…AMGF), 232 to 252 (ILCY…VPLH), 263 to 283 (TAPV…YALL), 297 to 317 (FSPL…LTSF), 326 to 346 (IAYS…SFSS), 352 to 372 (AMLQ…LVGA), 396 to 416 (FALW…SGFV), 437 to 457 (VIMA…LLSM), and 484 to 504 (IYII…PRLV).

The protein belongs to the complex I subunit 4 family.

Its subcellular location is the cellular thylakoid membrane. It catalyses the reaction a plastoquinone + NADH + (n+1) H(+)(in) = a plastoquinol + NAD(+) + n H(+)(out). The catalysed reaction is a plastoquinone + NADPH + (n+1) H(+)(in) = a plastoquinol + NADP(+) + n H(+)(out). NDH-1 shuttles electrons from NAD(P)H, via FMN and iron-sulfur (Fe-S) centers, to quinones in the respiratory chain. The immediate electron acceptor for the enzyme in this species is believed to be plastoquinone. Couples the redox reaction to proton translocation (for every two electrons transferred, four hydrogen ions are translocated across the cytoplasmic membrane), and thus conserves the redox energy in a proton gradient. In Prochlorococcus marinus subsp. pastoris (strain CCMP1986 / NIES-2087 / MED4), this protein is NAD(P)H-quinone oxidoreductase chain 4.